A 694-amino-acid polypeptide reads, in one-letter code: DNA-directed RNA polymerase subunit beta' (694 aa).

4 residues coordinate Zn(2+): Cys-69, Cys-71, Cys-87, and Cys-90. Mg(2+) contacts are provided by Asp-489, Asp-491, and Asp-493.

The protein belongs to the RNA polymerase beta' chain family. RpoC1 subfamily. As to quaternary structure, in plastids the minimal PEP RNA polymerase catalytic core is composed of four subunits: alpha, beta, beta', and beta''. When a (nuclear-encoded) sigma factor is associated with the core the holoenzyme is formed, which can initiate transcription. It depends on Mg(2+) as a cofactor. Zn(2+) serves as cofactor.

The protein localises to the plastid. It is found in the chloroplast. The enzyme catalyses RNA(n) + a ribonucleoside 5'-triphosphate = RNA(n+1) + diphosphate. DNA-dependent RNA polymerase catalyzes the transcription of DNA into RNA using the four ribonucleoside triphosphates as substrates. In Adiantum capillus-veneris (Maidenhair fern), this protein is DNA-directed RNA polymerase subunit beta'.